A 421-amino-acid chain; its full sequence is Glutamyl-tRNA reductase (421 aa).

Residues 49–52, S109, 114–116, and Q120 each bind substrate; these read TCNR and EAQ. Catalysis depends on C50, which acts as the Nucleophile. 189 to 194 provides a ligand contact to NADP(+); it reads GAGEMC.

It belongs to the glutamyl-tRNA reductase family. Homodimer.

The enzyme catalyses (S)-4-amino-5-oxopentanoate + tRNA(Glu) + NADP(+) = L-glutamyl-tRNA(Glu) + NADPH + H(+). The protein operates within porphyrin-containing compound metabolism; protoporphyrin-IX biosynthesis; 5-aminolevulinate from L-glutamyl-tRNA(Glu): step 1/2. Its function is as follows. Catalyzes the NADPH-dependent reduction of glutamyl-tRNA(Glu) to glutamate 1-semialdehyde (GSA). The sequence is that of Glutamyl-tRNA reductase from Magnetococcus marinus (strain ATCC BAA-1437 / JCM 17883 / MC-1).